The primary structure comprises 319 residues: Lipoyl synthase (319 aa).

The disordered stretch occupies residues 1–32; sequence MVVLVDTVSSTPVRPRHPEKAARPDSLSPKKP. The span at 16–32 shows a compositional bias: basic and acidic residues; that stretch reads RHPEKAARPDSLSPKKP. Cys-61, Cys-66, Cys-72, Cys-87, Cys-91, Cys-94, and Ser-300 together coordinate [4Fe-4S] cluster. One can recognise a Radical SAM core domain in the interval 73–289; that stretch reads WDKKHATFMI…GKTAYAKGFL (217 aa).

Belongs to the radical SAM superfamily. Lipoyl synthase family. The cofactor is [4Fe-4S] cluster.

The protein localises to the cytoplasm. It carries out the reaction [[Fe-S] cluster scaffold protein carrying a second [4Fe-4S](2+) cluster] + N(6)-octanoyl-L-lysyl-[protein] + 2 oxidized [2Fe-2S]-[ferredoxin] + 2 S-adenosyl-L-methionine + 4 H(+) = [[Fe-S] cluster scaffold protein] + N(6)-[(R)-dihydrolipoyl]-L-lysyl-[protein] + 4 Fe(3+) + 2 hydrogen sulfide + 2 5'-deoxyadenosine + 2 L-methionine + 2 reduced [2Fe-2S]-[ferredoxin]. It participates in protein modification; protein lipoylation via endogenous pathway; protein N(6)-(lipoyl)lysine from octanoyl-[acyl-carrier-protein]: step 2/2. Functionally, catalyzes the radical-mediated insertion of two sulfur atoms into the C-6 and C-8 positions of the octanoyl moiety bound to the lipoyl domains of lipoate-dependent enzymes, thereby converting the octanoylated domains into lipoylated derivatives. The protein is Lipoyl synthase of Rhodopseudomonas palustris (strain BisB5).